A 151-amino-acid chain; its full sequence is Histone H2B.1 (151 aa).

Composition is skewed to basic and acidic residues over residues 1-28 (MAPKAEKKPAAKKPAEEEPATEKVEKAP) and 36-51 (EKRLPAGKSKEGGEGK). The disordered stretch occupies residues 1–58 (MAPKAEKKPAAKKPAEEEPATEKVEKAPAGKKPKAEKRLPAGKSKEGGEGKKGKKKAK). N6-acetyllysine occurs at positions 7 and 37. Lys-147 participates in a covalent cross-link: Glycyl lysine isopeptide (Lys-Gly) (interchain with G-Cter in ubiquitin).

It belongs to the histone H2B family. The nucleosome is a histone octamer containing two molecules each of H2A, H2B, H3 and H4 assembled in one H3-H4 heterotetramer and two H2A-H2B heterodimers. The octamer wraps approximately 147 bp of DNA. In terms of processing, can be acetylated to form H2BK6ac and H2BK33ac. Monoubiquitinated to form H2BK143ub1; may give a specific tag for epigenetic transcriptional activation.

It is found in the nucleus. The protein resides in the chromosome. Core component of nucleosome. Nucleosomes wrap and compact DNA into chromatin, limiting DNA accessibility to the cellular machineries which require DNA as a template. Histones thereby play a central role in transcription regulation, DNA repair, DNA replication and chromosomal stability. DNA accessibility is regulated via a complex set of post-translational modifications of histones, also called histone code, and nucleosome remodeling. This chain is Histone H2B.1, found in Zea mays (Maize).